Consider the following 135-residue polypeptide: Translation initiation factor 2 subunit beta (135 aa).

The protein belongs to the eIF-2-beta/eIF-5 family. As to quaternary structure, heterotrimer composed of an alpha, a beta and a gamma chain.

EIF-2 functions in the early steps of protein synthesis by forming a ternary complex with GTP and initiator tRNA. The protein is Translation initiation factor 2 subunit beta of Methanobrevibacter smithii (strain ATCC 35061 / DSM 861 / OCM 144 / PS).